The chain runs to 1234 residues: 1-phosphatidylinositol 4,5-bisphosphate phosphodiesterase beta-3 (1234 aa).

Ala-2 bears the N-acetylalanine mark. In terms of domain architecture, PI-PLC X-box spans 318–468 (DMTQPLSAYF…LMGRILVKNK (151 aa)). Catalysis depends on residues His-332 and His-379. The disordered stretch occupies residues 467 to 587 (NKKRHRPSAG…GTASSEVNAT (121 aa)). 4 positions are modified to phosphoserine: Ser-474, Ser-490, Ser-495, and Ser-537. Positions 488–515 (EQSNSALSESSAATEPSSPQLGSPSSDS) are enriched in low complexity. Over residues 555–567 (REDEEEDEEEEEQ) the composition is skewed to acidic residues. Over residues 576–587 (DEGTASSEVNAT) the composition is skewed to polar residues. Residues 590-706 (MSTLVNYIEP…GYLLKPEFMR (117 aa)) enclose the PI-PLC Y-box domain. The C2 domain maps to 707-835 (RPDKSFDPFT…RNEANQPLCL (129 aa)). Over residues 887 to 908 (AGQETCQDTQSQQLGSQPSSNP) the composition is skewed to polar residues. The tract at residues 887–937 (AGQETCQDTQSQQLGSQPSSNPTPSPLDASPRRPPGPTTSPASTSLSSPGQ) is disordered. Over residues 925–936 (TSPASTSLSSPG) the composition is skewed to low complexity. Residues Ser-926 and Ser-1105 each carry the phosphoserine modification. Positions 1198-1234 (GLGDGPLVACASNGHAPGSSGHLSGADSESQEENTQL) are disordered. Residues 1231–1234 (NTQL) form an interaction with SHANK2 region.

In terms of assembly, interacts with SHANK2. Interacts with LPAR2. Ca(2+) is required as a cofactor.

It is found in the cytoplasm. The protein resides in the membrane. The protein localises to the nucleus. It carries out the reaction a 1,2-diacyl-sn-glycero-3-phospho-(1D-myo-inositol-4,5-bisphosphate) + H2O = 1D-myo-inositol 1,4,5-trisphosphate + a 1,2-diacyl-sn-glycerol + H(+). The catalysed reaction is a 1,2-diacyl-sn-glycero-3-phospho-(1D-myo-inositol) + H2O = 1D-myo-inositol 1-phosphate + a 1,2-diacyl-sn-glycerol + H(+). With respect to regulation, activated by G(q)/G(11) G alpha proteins in response to ligand-binding to G protein-coupled receptors. Its function is as follows. Catalyzes the production of the second messenger molecules diacylglycerol (DAG) and inositol 1,4,5-trisphosphate (IP3). Key transducer of G protein-coupled receptor signaling: activated by G(q)/G(11) G alpha proteins downstream of G protein-coupled receptors activation. In neutrophils, participates in a phospholipase C-activating N-formyl peptide-activated GPCR (G protein-coupled receptor) signaling pathway by promoting RASGRP4 activation by DAG, to promote neutrophil functional responses. This Homo sapiens (Human) protein is 1-phosphatidylinositol 4,5-bisphosphate phosphodiesterase beta-3.